A 181-amino-acid chain; its full sequence is Ribulose bisphosphate carboxylase small subunit 2B, chloroplastic (181 aa).

The N-terminal 54 residues, 1–54, are a transit peptide targeting the chloroplast; it reads MASSMFSSTAVVTSPAQATMVAPFTGLKSSASFPVTRKANNDITSITSNGGRVS.

The protein belongs to the RuBisCO small chain family. Heterohexadecamer of 8 large and 8 small subunits.

The protein localises to the plastid. It is found in the chloroplast. Its function is as follows. RuBisCO catalyzes two reactions: the carboxylation of D-ribulose 1,5-bisphosphate, the primary event in carbon dioxide fixation, as well as the oxidative fragmentation of the pentose substrate. Both reactions occur simultaneously and in competition at the same active site. Although the small subunit is not catalytic it is essential for maximal activity. The protein is Ribulose bisphosphate carboxylase small subunit 2B, chloroplastic (RBCS-2B) of Arabidopsis thaliana (Mouse-ear cress).